The sequence spans 99 residues: Plastocyanin (99 aa).

Residues 1-99 enclose the Plastocyanin-like domain; the sequence is LDVLLGGDDG…AGMVGKVTVN (99 aa). Residues His-37, Cys-84, His-87, and Met-92 each contribute to the Cu cation site.

The protein belongs to the plastocyanin family. Cu(2+) serves as cofactor.

The protein resides in the plastid. It localises to the chloroplast thylakoid membrane. Functionally, participates in electron transfer between P700 and the cytochrome b6-f complex in photosystem I. The polypeptide is Plastocyanin (PETE) (Solanum tuberosum (Potato)).